The chain runs to 395 residues: uncharacterized protein (395 aa).

The segment at 247–270 is disordered; it reads GGTVVPPNPDQPNPTPPDSSSPNY. A compositionally biased stretch (pro residues) spans 252 to 265; it reads PPNPDQPNPTPPDS.

This is an uncharacterized protein from Vibrio cholerae serotype O1 (strain ATCC 39315 / El Tor Inaba N16961).